Consider the following 269-residue polypeptide: Protein NETWORKED 3A (269 aa).

One can recognise an NAB domain in the interval 6–87; that stretch reads SKWWWIGNHN…ERYDLLRPSS (82 aa). The interval 87-113 is disordered; that stretch reads SVHKHGSDSESHEKSSTCDESSWSEAC. Positions 91 to 103 are enriched in basic and acidic residues; that stretch reads HGSDSESHEKSST. Residues 155-214 are a coiled coil; the sequence is NGNSEMMKIEIERLREENKVYSEMVREKDEEKREAIRQMSVAIQMLKEENSELKKRVTNT.

It belongs to the NET family.

The protein resides in the cytoplasm. It is found in the cytoskeleton. It localises to the nucleus membrane. Functionally, plant-specific actin binding protein. May be part of a membrane-cytoskeletal adapter complex. This chain is Protein NETWORKED 3A, found in Arabidopsis thaliana (Mouse-ear cress).